The sequence spans 198 residues: MIKLIVGLGNPGAEYEATRHNAGFWLVDQLARMGGTTLRVESRFHGLAGRARLWDQDVWLLKPSTFMNRSGLSVVSLARFYKILPDEIVVAHDEMDLPAGSAKLKRGGGSGGHNGLKDISAHLTTQDYWRLRIGVGHPRNAPGGAAGGREDVVNFVLKPPRKEEQQAIDEAIDRCIGPLGTLARGESERAMMELHTGR.

Residue Tyr-15 participates in tRNA binding. Catalysis depends on His-20, which acts as the Proton acceptor. Positions 66, 68, and 114 each coordinate tRNA.

Belongs to the PTH family. In terms of assembly, monomer.

It is found in the cytoplasm. It carries out the reaction an N-acyl-L-alpha-aminoacyl-tRNA + H2O = an N-acyl-L-amino acid + a tRNA + H(+). Its function is as follows. Hydrolyzes ribosome-free peptidyl-tRNAs (with 1 or more amino acids incorporated), which drop off the ribosome during protein synthesis, or as a result of ribosome stalling. Functionally, catalyzes the release of premature peptidyl moieties from peptidyl-tRNA molecules trapped in stalled 50S ribosomal subunits, and thus maintains levels of free tRNAs and 50S ribosomes. This is Peptidyl-tRNA hydrolase from Cupriavidus metallidurans (strain ATCC 43123 / DSM 2839 / NBRC 102507 / CH34) (Ralstonia metallidurans).